Here is a 425-residue protein sequence, read N- to C-terminus: D-amino acid dehydrogenase (425 aa).

3–17 provides a ligand contact to FAD; it reads VLVMGAGVIGVTTAY.

Belongs to the DadA oxidoreductase family. FAD serves as cofactor.

It carries out the reaction a D-alpha-amino acid + A + H2O = a 2-oxocarboxylate + AH2 + NH4(+). Its pathway is amino-acid degradation; D-alanine degradation; NH(3) and pyruvate from D-alanine: step 1/1. Its function is as follows. Oxidative deamination of D-amino acids. This is D-amino acid dehydrogenase from Rhodopseudomonas palustris (strain HaA2).